The primary structure comprises 440 residues: MSEFSQTVPELVAWARKNDFSISLPVDRLSFLLAVATLNGERLDGEMSEGELVDAFRHVSDAFEQTSETIGVRANNAINDMVRQRLLNRFTSEQAEGNAIYRLTPLGIGITDYYIRQREFSTLRLSMQLSIVAGELKRAADAAEEGGDEFHWHRNVYAPLKYSVAEIFDSIDLTQRLMDEQQQQVKDDIAQLLNKDWRAAISSCELLLSETSGTLRELQDTLEAAGDKLQANLLRIQDATMPHDDLHFVDRLVFDLQSKLDRIISWGQQSIDLWIGYDRHVHKFIRTAIDMDKNRVFAQRLRQSVQTYFDEPWALTYANADRLLDMRDEEMALRDEEVTGELPEDLEYEEFNEIREQLAAIIEEQLAVYKTRQVPLDLGLVVREYLSQYPRARHFDVARIVIDQAVRLGVAQADFTGLPAKWQPINDYGAKVQAHVIDKY.

The tract at residues 208 to 236 is leucine-zipper; the sequence is LSETSGTLRELQDTLEAAGDKLQANLLRI.

This sequence belongs to the MukF family. As to quaternary structure, interacts, and probably forms a ternary complex, with MukE and MukB via its C-terminal region. The complex formation is stimulated by calcium or magnesium. It is required for an interaction between MukE and MukB.

Its subcellular location is the cytoplasm. The protein localises to the nucleoid. Involved in chromosome condensation, segregation and cell cycle progression. May participate in facilitating chromosome segregation by condensation DNA from both sides of a centrally located replisome during cell division. Not required for mini-F plasmid partitioning. Probably acts via its interaction with MukB and MukE. Overexpression results in anucleate cells. It has a calcium binding activity. The chain is Chromosome partition protein MukF from Shigella boydii serotype 18 (strain CDC 3083-94 / BS512).